The primary structure comprises 429 residues: Glutamate-1-semialdehyde 2,1-aminomutase 2 (429 aa).

The residue at position 268 (K268) is an N6-(pyridoxal phosphate)lysine.

It belongs to the class-III pyridoxal-phosphate-dependent aminotransferase family. HemL subfamily. As to quaternary structure, homodimer. Pyridoxal 5'-phosphate is required as a cofactor.

Its subcellular location is the cytoplasm. The enzyme catalyses (S)-4-amino-5-oxopentanoate = 5-aminolevulinate. It functions in the pathway porphyrin-containing compound metabolism; protoporphyrin-IX biosynthesis; 5-aminolevulinate from L-glutamyl-tRNA(Glu): step 2/2. The protein is Glutamate-1-semialdehyde 2,1-aminomutase 2 of Bacillus velezensis (strain DSM 23117 / BGSC 10A6 / LMG 26770 / FZB42) (Bacillus amyloliquefaciens subsp. plantarum).